We begin with the raw amino-acid sequence, 395 residues long: Xylose isomerase (395 aa).

Catalysis depends on residues H54 and E57. The segment at 80–108 is disordered; the sequence is AVPAGAGRDRHEGADGDDEPVHAPGCSRD. Residues E189, E225, H228, D253, D263, D265, and D295 each contribute to the Mg(2+) site.

This sequence belongs to the xylose isomerase family. As to quaternary structure, homotetramer. The cofactor is Mg(2+).

The protein localises to the cytoplasm. It catalyses the reaction alpha-D-xylose = alpha-D-xylulofuranose. This Streptomyces lividans protein is Xylose isomerase.